The sequence spans 944 residues: Leucine--tRNA ligase 2 (944 aa).

Positions 36 to 46 (PYPNSPWHIGH) match the 'HIGH' region motif. Positions 623–627 (KMSKS) match the 'KMSKS' region motif. An ATP-binding site is contributed by lysine 626.

This sequence belongs to the class-I aminoacyl-tRNA synthetase family.

It is found in the cytoplasm. It catalyses the reaction tRNA(Leu) + L-leucine + ATP = L-leucyl-tRNA(Leu) + AMP + diphosphate. The protein is Leucine--tRNA ligase 2 of Saccharolobus solfataricus (strain ATCC 35092 / DSM 1617 / JCM 11322 / P2) (Sulfolobus solfataricus).